A 379-amino-acid chain; its full sequence is Lipid-A-disaccharide synthase (379 aa).

This sequence belongs to the LpxB family.

The enzyme catalyses a lipid X + a UDP-2-N,3-O-bis[(3R)-3-hydroxyacyl]-alpha-D-glucosamine = a lipid A disaccharide + UDP + H(+). Its pathway is bacterial outer membrane biogenesis; LPS lipid A biosynthesis. Condensation of UDP-2,3-diacylglucosamine and 2,3-diacylglucosamine-1-phosphate to form lipid A disaccharide, a precursor of lipid A, a phosphorylated glycolipid that anchors the lipopolysaccharide to the outer membrane of the cell. The protein is Lipid-A-disaccharide synthase of Vibrio parahaemolyticus serotype O3:K6 (strain RIMD 2210633).